A 118-amino-acid chain; its full sequence is NADH-ubiquinone oxidoreductase chain 3 (118 aa).

Helical transmembrane passes span 9–29 (IYLV…FLFA), 62–82 (LVSI…PWAV), and 87–107 (IDLF…IGSL).

The protein belongs to the complex I subunit 3 family.

The protein localises to the mitochondrion membrane. It carries out the reaction a ubiquinone + NADH + 5 H(+)(in) = a ubiquinol + NAD(+) + 4 H(+)(out). Its function is as follows. Core subunit of the mitochondrial membrane respiratory chain NADH dehydrogenase (Complex I) that is believed to belong to the minimal assembly required for catalysis. Complex I functions in the transfer of electrons from NADH to the respiratory chain. The immediate electron acceptor for the enzyme is believed to be ubiquinone. This is NADH-ubiquinone oxidoreductase chain 3 (ND3) from Zea mays (Maize).